We begin with the raw amino-acid sequence, 159 residues long: Transcription elongation factor GreA (159 aa).

Residues 1–76 (MAEEKEVVLT…SLEKTLKKAR (76 aa)) are a coiled coil.

Belongs to the GreA/GreB family.

Its function is as follows. Necessary for efficient RNA polymerase transcription elongation past template-encoded arresting sites. The arresting sites in DNA have the property of trapping a certain fraction of elongating RNA polymerases that pass through, resulting in locked ternary complexes. Cleavage of the nascent transcript by cleavage factors such as GreA or GreB allows the resumption of elongation from the new 3'terminus. GreA releases sequences of 2 to 3 nucleotides. The sequence is that of Transcription elongation factor GreA from Syntrophomonas wolfei subsp. wolfei (strain DSM 2245B / Goettingen).